Consider the following 369-residue polypeptide: Biglycan (369 aa).

The N-terminal stretch at 1–16 (MRPLWLLTLLLALSQA) is a signal peptide. Positions 17 to 37 (LPFEQKGFWDFTLDDGLLMMN) are excised as a propeptide. O-linked (Xyl...) (glycosaminoglycan) serine glycans are attached at residues Ser-42 and Ser-48. 2 disulfide bridges follow: Cys-64–Cys-70 and Cys-68–Cys-77. 12 LRR repeats span residues 83–103 (KTVPKEISPDTTLLDLQNNDI), 104–127 (SELRKDDFKGLQHLYALVLVNNKI), 128–151 (SKIHEKAFSPLRKLQKLYISKNHL), 152–172 (VEIPPNLPSSLVELRIHDNRI), 173–196 (RKVPKGVFSGLRNMNCIEMGGNPL), 197–221 (ENSGFEPGAFDGLKLNYLRISEAKL), 222–242 (TGIPKDLPETLNELHLDHNKI), 243–266 (QAIELEDLLRYSKLYRLGLGHNQI), 267–290 (RMIENGSLSFLPTLRELHLDNNKL), 291–313 (SRVPAGLPDLKLLQVVYLHSNNI), 314–343 (TKVGINDFCPMGFGVKRAYYNGISLFNNPV), and 344–369 (PYWEVQPATFRCVTDRLAIQFGNYKK). 2 N-linked (GlcNAc...) asparagine glycosylation sites follow: Asn-271 and Asn-312. Cys-322 and Cys-355 are disulfide-bonded.

It belongs to the small leucine-rich proteoglycan (SLRP) family. SLRP class I subfamily. In terms of assembly, homodimer. Forms a ternary complex with MFAP2 and ELN. In terms of processing, the two attached glycosaminoglycan chains can be either chondroitin sulfate or dermatan sulfate. Found in several connective tissues, especially in articular cartilages.

It localises to the secreted. Its subcellular location is the extracellular space. The protein resides in the extracellular matrix. Its function is as follows. May be involved in collagen fiber assembly. The protein is Biglycan (Bgn) of Rattus norvegicus (Rat).